We begin with the raw amino-acid sequence, 229 residues long: Large ribosomal subunit protein uL1 (229 aa).

It belongs to the universal ribosomal protein uL1 family. Part of the 50S ribosomal subunit.

In terms of biological role, binds directly to 23S rRNA. The L1 stalk is quite mobile in the ribosome, and is involved in E site tRNA release. Functionally, protein L1 is also a translational repressor protein, it controls the translation of the L11 operon by binding to its mRNA. The polypeptide is Large ribosomal subunit protein uL1 (Leifsonia xyli subsp. xyli (strain CTCB07)).